The following is a 454-amino-acid chain: Golgi reassembly-stacking protein 2 (454 aa).

A lipid anchor (N-myristoyl glycine) is attached at G2. PDZ GRASP-type domains follow at residues 15–105 (EGYH…FCSF) and 111–199 (NVWH…YGYL). Residues 15-215 (EGYHVLRVQE…PFEEGKKISL (201 aa)) form a GRASP region. A dimethylated arginine mark is found at R30 and R47. The segment at 194–199 (IGYGYL) is important for membrane binding. At S214 the chain carries Phosphoserine. Phosphothreonine is present on T222. T225 is modified (phosphothreonine; by MAPK). A disordered region spans residues 377-454 (EGSSAASAGE…VTDANASGAS (78 aa)). S411 is modified (phosphoserine). Phosphothreonine is present on T435. Phosphoserine occurs at positions 443 and 451.

It belongs to the GORASP family. In terms of assembly, homodimer. Homooligomer. ER stress induces phosphorylation-dependent monomerization. Interacts with BLZF1/Golgin 45. Identified in a complex with RAB2 and GORASP2. Interacts with JAM2 and JAM3. Interacts with members of the p24 cargo receptors. Interacts with CNIH1 and the cytoplasmic domain of transmembrane TGFA, prior its transit in the trans-Golgi. Interacts with KCTD5. Interacts with TMED2 and TMED3. Interacts with SEC16A in response to ER stress. Interacts (via PDZ GRASP-type 1 domain) with core-glycosylated CFTR in response to ER stress. In terms of processing, myristoylated. Myristoylation is essential for the Golgi targeting. Post-translationally, palmitoylated. Phosphorylated in mitotic cells. ER stress-induced phosphorylation at Ser-443 induces monomerization and subsequent relocalization from Golgi to ER which is essential for mediating unconventional (ER/Golgi-independent) trafficking of CFTR to the cell membrane. In terms of tissue distribution, detected in lung, brain, heart, liver and testis.

The protein localises to the golgi apparatus membrane. It localises to the endoplasmic reticulum membrane. The protein resides in the golgi apparatus. In terms of biological role, key structural protein of the Golgi apparatus. The membrane cisternae of the Golgi apparatus adhere to each other to form stacks, which are aligned side by side to form the Golgi ribbon. Acting in concert with GORASP1/GRASP65, is required for the formation and maintenance of the Golgi ribbon, and may be dispensable for the formation of stacks. However, other studies suggest that GORASP2 plays a role in the assembly and membrane stacking of the Golgi cisternae, and in the process by which Golgi stacks reform after breakdown during mitosis and meiosis. May regulate the intracellular transport and presentation of a defined set of transmembrane proteins, such as transmembrane TGFA. Required for normal acrosome formation during spermiogenesis and normal male fertility, probably by promoting colocalization of JAM2 and JAM3 at contact sites between germ cells and Sertoli cells. Mediates ER stress-induced unconventional (ER/Golgi-independent) trafficking of core-glycosylated CFTR to cell membrane. This Rattus norvegicus (Rat) protein is Golgi reassembly-stacking protein 2 (Gorasp2).